The chain runs to 108 residues: Flagellar hook-basal body complex protein FliE (108 aa).

This sequence belongs to the FliE family.

Its subcellular location is the bacterial flagellum basal body. This chain is Flagellar hook-basal body complex protein FliE, found in Pseudomonas fluorescens (strain ATCC BAA-477 / NRRL B-23932 / Pf-5).